The sequence spans 206 residues: Ras-related protein RABG3e (206 aa).

15–22 (GDSGVGKT) is a GTP binding site. The Effector region signature appears at 37–45 (YKATIGADF). GTP-binding positions include 63–67 (DTAGQ), 125–128 (NKID), and 158–159 (SA). Residues cysteine 204 and cysteine 206 are each lipidated (S-geranylgeranyl cysteine). Cysteine 206 carries the post-translational modification Cysteine methyl ester.

It belongs to the small GTPase superfamily. Rab family.

Its subcellular location is the cell membrane. Its function is as follows. Intracellular vesicle trafficking and protein transport. May play a role in adaptation to stress by recylcing macromolecules in specific cellular compartments. This chain is Ras-related protein RABG3e (RABG3E), found in Arabidopsis thaliana (Mouse-ear cress).